The following is a 580-amino-acid chain: mRNA cap guanine-N(7) methyltransferase (580 aa).

2 stretches are compositionally biased toward polar residues: residues 1–17 (MSGSKQGSEKASITSLI) and 25–53 (EATSVSTQNQSPKTQITQTENVEVQNSDL). The tract at residues 1-222 (MSGSKQGSEK…PVEAQPYSRL (222 aa)) is disordered. A compositionally biased stretch (basic and acidic residues) spans 54–67 (KVTENKPKNTEMKP). Polar residues predominate over residues 69 to 90 (DPNTNASTTENTPITTSNAQVS). Basic and acidic residues predominate over residues 102-154 (REPEEAQNRYDRYVPRVDNRRRGEPRVAEVRQDPRYAKYLRQDQEERRIRRPD). Acidic residues predominate over residues 191-214 (ESEENGDEQQGDDEEETPGNEEPV). The 309-residue stretch at 271–579 (SPIYKLRNFN…FYLGFAFEKL (309 aa)) folds into the mRNA cap 0 methyltransferase domain. Residue 280–281 (NN) coordinates mRNA. Residues K284, C308, D330, D376, Q406, and Y411 each coordinate S-adenosyl-L-methionine.

This sequence belongs to the class I-like SAM-binding methyltransferase superfamily. mRNA cap 0 methyltransferase family.

It is found in the nucleus. The catalysed reaction is a 5'-end (5'-triphosphoguanosine)-ribonucleoside in mRNA + S-adenosyl-L-methionine = a 5'-end (N(7)-methyl 5'-triphosphoguanosine)-ribonucleoside in mRNA + S-adenosyl-L-homocysteine. Its function is as follows. Responsible for methylating the 5'-cap structure of mRNAs. The polypeptide is mRNA cap guanine-N(7) methyltransferase (ABD1) (Meyerozyma guilliermondii (strain ATCC 6260 / CBS 566 / DSM 6381 / JCM 1539 / NBRC 10279 / NRRL Y-324) (Yeast)).